The following is a 492-amino-acid chain: Bifunctional purine biosynthesis protein PurH (492 aa).

The 144-residue stretch at 1–144 folds into the MGS-like domain; the sequence is MRKALLSVSD…KNFRHVITVV (144 aa).

Belongs to the PurH family.

It carries out the reaction (6R)-10-formyltetrahydrofolate + 5-amino-1-(5-phospho-beta-D-ribosyl)imidazole-4-carboxamide = 5-formamido-1-(5-phospho-D-ribosyl)imidazole-4-carboxamide + (6S)-5,6,7,8-tetrahydrofolate. The catalysed reaction is IMP + H2O = 5-formamido-1-(5-phospho-D-ribosyl)imidazole-4-carboxamide. It participates in purine metabolism; IMP biosynthesis via de novo pathway; 5-formamido-1-(5-phospho-D-ribosyl)imidazole-4-carboxamide from 5-amino-1-(5-phospho-D-ribosyl)imidazole-4-carboxamide (10-formyl THF route): step 1/1. Its pathway is purine metabolism; IMP biosynthesis via de novo pathway; IMP from 5-formamido-1-(5-phospho-D-ribosyl)imidazole-4-carboxamide: step 1/1. This Macrococcus caseolyticus (strain JCSC5402) (Macrococcoides caseolyticum) protein is Bifunctional purine biosynthesis protein PurH.